The primary structure comprises 193 residues: dCTP deaminase (193 aa).

DCTP is bound by residues 110 to 115, aspartate 128, 136 to 138, tyrosine 171, lysine 178, and glutamine 182; these read RSSLAR and VLE. Catalysis depends on glutamate 138, which acts as the Proton donor/acceptor. The disordered stretch occupies residues 169 to 193; that stretch reads RPYNRRQDAKYRDQQGAVASRIDKD.

This sequence belongs to the dCTP deaminase family. Homotrimer.

The catalysed reaction is dCTP + H2O + H(+) = dUTP + NH4(+). It participates in pyrimidine metabolism; dUMP biosynthesis; dUMP from dCTP (dUTP route): step 1/2. Catalyzes the deamination of dCTP to dUTP. This Salmonella arizonae (strain ATCC BAA-731 / CDC346-86 / RSK2980) protein is dCTP deaminase.